Consider the following 536-residue polypeptide: Metal transporter Nramp2 (536 aa).

The tract at residues 1–37 (MSSPSGGEDSKDDEKDEESNRLLPLSSSSQSQSLQSE) is disordered. A compositionally biased stretch (low complexity) spans 22–36 (LLPLSSSSQSQSLQS). N-linked (GlcNAc...) asparagine glycosylation is present at asparagine 38. 12 helical membrane passes run 76-96 (LWLF…PGNL), 104-124 (AIAG…GLLI), 161-181 (VALI…IQIL), 185-205 (FLPL…FLFL), 213-233 (LEGV…WMCG), 259-279 (AVGV…SALV), 305-325 (VALF…AKGF), 347-367 (YGGG…AAGQ), 400-420 (SFAI…EASL), 435-455 (IPFA…MGVF), 465-485 (AWTI…DFFI), and 492-512 (LFGF…IYLV).

The protein belongs to the NRAMP (TC 2.A.55) family.

Its subcellular location is the membrane. In terms of biological role, probable divalent metal transporter. This is Metal transporter Nramp2 from Populus trichocarpa (Western balsam poplar).